Reading from the N-terminus, the 511-residue chain is Probable mannosyl-oligosaccharide alpha-1,2-mannosidase 1B (511 aa).

The N-terminal stretch at Met1–Ala18 is a signal peptide. Asn90 and Asn177 each carry an N-linked (GlcNAc...) asparagine glycan. Cys327 and Cys356 are disulfide-bonded. Glu370 acts as the Proton donor in catalysis. N-linked (GlcNAc...) asparagine glycosylation is present at Asn433. Residue Thr501 participates in Ca(2+) binding.

The protein belongs to the glycosyl hydrolase 47 family. In terms of assembly, monomer. The cofactor is Ca(2+). Requires Mg(2+) as cofactor.

It is found in the cytoplasmic vesicle lumen. It carries out the reaction N(4)-(alpha-D-Man-(1-&gt;2)-alpha-D-Man-(1-&gt;2)-alpha-D-Man-(1-&gt;3)-[alpha-D-Man-(1-&gt;2)-alpha-D-Man-(1-&gt;3)-[alpha-D-Man-(1-&gt;2)-alpha-D-Man-(1-&gt;6)]-alpha-D-Man-(1-&gt;6)]-beta-D-Man-(1-&gt;4)-beta-D-GlcNAc-(1-&gt;4)-beta-D-GlcNAc)-L-asparaginyl-[protein] (N-glucan mannose isomer 9A1,2,3B1,2,3) + 4 H2O = N(4)-(alpha-D-Man-(1-&gt;3)-[alpha-D-Man-(1-&gt;3)-[alpha-D-Man-(1-&gt;6)]-alpha-D-Man-(1-&gt;6)]-beta-D-Man-(1-&gt;4)-beta-D-GlcNAc-(1-&gt;4)-beta-D-GlcNAc)-L-asparaginyl-[protein] (N-glucan mannose isomer 5A1,2) + 4 beta-D-mannose. The enzyme catalyses N(4)-(alpha-D-Man-(1-&gt;2)-alpha-D-Man-(1-&gt;2)-alpha-D-Man-(1-&gt;3)-[alpha-D-Man-(1-&gt;3)-[alpha-D-Man-(1-&gt;2)-alpha-D-Man-(1-&gt;6)]-alpha-D-Man-(1-&gt;6)]-beta-D-Man-(1-&gt;4)-beta-D-GlcNAc-(1-&gt;4)-beta-D-GlcNAc)-L-asparaginyl-[protein] (N-glucan mannose isomer 8A1,2,3B1,3) + 3 H2O = N(4)-(alpha-D-Man-(1-&gt;3)-[alpha-D-Man-(1-&gt;3)-[alpha-D-Man-(1-&gt;6)]-alpha-D-Man-(1-&gt;6)]-beta-D-Man-(1-&gt;4)-beta-D-GlcNAc-(1-&gt;4)-beta-D-GlcNAc)-L-asparaginyl-[protein] (N-glucan mannose isomer 5A1,2) + 3 beta-D-mannose. It functions in the pathway protein modification; protein glycosylation. Involved in the maturation of Asn-linked oligosaccharides. Progressively trims alpha-1,2-linked mannose residues from Man(9)GlcNAc(2) to produce Man(5)GlcNAc(2). This chain is Probable mannosyl-oligosaccharide alpha-1,2-mannosidase 1B (mns1B), found in Aspergillus clavatus (strain ATCC 1007 / CBS 513.65 / DSM 816 / NCTC 3887 / NRRL 1 / QM 1276 / 107).